The chain runs to 407 residues: Negative RAS protein regulator protein (407 aa).

Disordered regions lie at residues 51-94 (PRII…ARQI), 165-187 (HPSK…NLNF), and 241-273 (NNNN…NVFS). A compositionally biased stretch (low complexity) spans 55–73 (SSSNSNSNSNSNSNSNSNS). A Myb-like domain is found at 90 to 158 (SARQIRKKWK…QCHDRFKVLY (69 aa)). Over residues 165 to 177 (HPSKKSKQKKKKS) the composition is skewed to basic residues. Over residues 241–270 (NNNNNNINNSNNSNNNNSNNINRNSNHSTN) the composition is skewed to low complexity.

The protein localises to the nucleus. In terms of biological role, negative regulator of the Ras-cyclic AMP pathway. Negatively regulate the activity of normal but not mutationally activated Ras proteins. The down-regulatory effect of RPI1 requires the presence of one of the two Ras GTPase activators, IRA1 and IRA2. In Saccharomyces cerevisiae (strain ATCC 204508 / S288c) (Baker's yeast), this protein is Negative RAS protein regulator protein (RPI1).